The primary structure comprises 328 residues: V-set and immunoglobulin domain-containing protein 2 (328 aa).

Residues methionine 1–alanine 24 form the signal peptide. The 114-residue stretch at valine 25–isoleucine 138 folds into the Ig-like V-type domain. Residues valine 25 to alanine 244 lie on the Extracellular side of the membrane. Residues cysteine 46 and cysteine 122 are joined by a disulfide bond. Residues asparagine 139, asparagine 207, and asparagine 232 are each glycosylated (N-linked (GlcNAc...) asparagine). The region spanning proline 145 to serine 234 is the Ig-like C2-type domain. A disulfide bond links cysteine 167 and cysteine 218. Residues glycine 245–isoleucine 265 form a helical membrane-spanning segment. Residues arginine 266–valine 328 lie on the Cytoplasmic side of the membrane.

Expressed in the stomach, colon and prostate.

Its subcellular location is the membrane. This is V-set and immunoglobulin domain-containing protein 2 (Vsig2) from Mus musculus (Mouse).